A 422-amino-acid chain; its full sequence is Tyrosine--tRNA ligase 1 (422 aa).

Tyrosine 36 provides a ligand contact to L-tyrosine. The short motif at 41 to 50 (PTAGSLHIGH) is the 'HIGH' region element. The L-tyrosine site is built by tyrosine 173 and glutamine 177. Positions 233 to 237 (KFGKT) match the 'KMSKS' region motif. Lysine 236 contributes to the ATP binding site. Residues 355–419 (SDVVTLLLET…GKKQFAMVKL (65 aa)) enclose the S4 RNA-binding domain.

The protein belongs to the class-I aminoacyl-tRNA synthetase family. TyrS type 1 subfamily. As to quaternary structure, homodimer.

Its subcellular location is the cytoplasm. It catalyses the reaction tRNA(Tyr) + L-tyrosine + ATP = L-tyrosyl-tRNA(Tyr) + AMP + diphosphate + H(+). Catalyzes the attachment of tyrosine to tRNA(Tyr) in a two-step reaction: tyrosine is first activated by ATP to form Tyr-AMP and then transferred to the acceptor end of tRNA(Tyr). This chain is Tyrosine--tRNA ligase 1, found in Vibrio vulnificus (strain CMCP6).